Reading from the N-terminus, the 650-residue chain is Solute carrier family 23 member 2 (650 aa).

Residues 1–20 (MMGIGKNTTSKSMEAGSSTE) are compositionally biased toward polar residues. A disordered region spans residues 1–21 (MMGIGKNTTSKSMEAGSSTEG). Topologically, residues 9 to 110 (TSKSMEAGSS…LCIFLGLQHY (102 aa)) are cytoplasmic. Serine 70 carries the post-translational modification Phosphoserine. Threonine 75 is subject to Phosphothreonine. Serine 78 bears the Phosphoserine mark. Threonine 79 carries the post-translational modification Phosphothreonine. Serine 81 is modified (phosphoserine). The helical transmembrane segment at 111 to 131 (LTCFSGTIAVPFLLADAMCVG) threads the bilayer. Over 132–139 (YDQWATSQ) the chain is Extracellular. A helical membrane pass occupies residues 140–160 (LIGTIFFCVGITTLLQTTFGC). Arginine 161 is a topological domain (cytoplasmic). Residues 162-182 (LPLFQASAFAFLAPARAILSL) traverse the membrane as a helical segment. Over 183-218 (DKWKCNTTDVSVANGTAELLHTEHIWYPRIREIQGA) the chain is Extracellular. Residues asparagine 188 and asparagine 196 are each glycosylated (N-linked (GlcNAc...) asparagine). The chain crosses the membrane as a helical span at residues 219-239 (IIMSSLIEVVIGLLGLPGALL). Over 240–266 (KYIGPLTITPTVALIGLSGFQAAGERA) the chain is Cytoplasmic. The chain crosses the membrane as a helical span at residues 267-284 (GKHWGIAMLTIFLVLLFS). At 285-288 (QYAR) the chain is on the extracellular side. An intramembrane region (helical) is located at residues 289–302 (NVKFPLPIYKSKKG). The Extracellular segment spans residues 303–309 (WTAYKLQ). A helical membrane pass occupies residues 310-330 (LFKMFPIILAILVSWLLCFIF). The Cytoplasmic segment spans residues 331 to 371 (TVTDVFPPDSTKYGFYARTDARQGVLLVAPWFKVPYPFQWG). Residues 372–392 (LPTVSAAGVIGMLSAVVASII) form a helical membrane-spanning segment. The Extracellular segment spans residues 393–417 (ESIGDYYACARLSCAPPPPIHAINR). Residues 418–438 (GIFVEGLSCVLDGIFGTGNGS) traverse the membrane as a helical segment. Residues 439-461 (TSSSPNIGVLGITKVGSRRVIQC) lie on the Cytoplasmic side of the membrane. Residues 462–482 (GAALMLALGMIGKFSALFASL) traverse the membrane as a helical segment. The Extracellular portion of the chain corresponds to 483–485 (PDP). The chain crosses the membrane as a helical span at residues 486 to 506 (VLGALFCTLFGMITAVGLSNL). Over 507–516 (QFIDLNSSRN) the chain is Cytoplasmic. A helical transmembrane segment spans residues 517–537 (LFVLGFSIFFGLVLPSYLRQN). Residues 538–547 (PLVTGITGID) are Extracellular-facing. A helical transmembrane segment spans residues 548 to 568 (QVLNVLLTTAMFVGGCVAFIL). Residues 569-650 (DNTIPGTPEE…SSDEDSQATG (82 aa)) are Cytoplasmic-facing. The residue at position 649 (threonine 649) is a Phosphothreonine.

It belongs to the nucleobase:cation symporter-2 (NCS2) (TC 2.A.40) family. Interacts with CLSTN3. Phosphorylated. In terms of tissue distribution, ubiquitous.

The protein resides in the cell membrane. It catalyses the reaction L-ascorbate(out) + 2 Na(+)(out) = L-ascorbate(in) + 2 Na(+)(in). In terms of biological role, sodium/ascorbate cotransporter. Mediates electrogenic uptake of vitamin C, with a stoichiometry of 2 Na(+) for each ascorbate. The sequence is that of Solute carrier family 23 member 2 (SLC23A2) from Homo sapiens (Human).